The primary structure comprises 147 residues: Large ribosomal subunit protein uL15 (147 aa).

The segment at 20–54 is disordered; it reads GRGIGSGKGKTSGKGHKGQKARGTGKVHPWFEGGQ. Residues 30 to 44 are compositionally biased toward basic residues; the sequence is TSGKGHKGQKARGTG.

Belongs to the universal ribosomal protein uL15 family. Part of the 50S ribosomal subunit.

In terms of biological role, binds to the 23S rRNA. The protein is Large ribosomal subunit protein uL15 of Thermosipho africanus (strain TCF52B).